Consider the following 234-residue polypeptide: 7-cyano-7-deazaguanine synthase (234 aa).

13 to 23 (LSGGQDSTTCL) serves as a coordination point for ATP. Residues cysteine 193, cysteine 201, cysteine 204, and cysteine 207 each contribute to the Zn(2+) site.

The protein belongs to the QueC family. It depends on Zn(2+) as a cofactor.

It catalyses the reaction 7-carboxy-7-deazaguanine + NH4(+) + ATP = 7-cyano-7-deazaguanine + ADP + phosphate + H2O + H(+). The protein operates within purine metabolism; 7-cyano-7-deazaguanine biosynthesis. Catalyzes the ATP-dependent conversion of 7-carboxy-7-deazaguanine (CDG) to 7-cyano-7-deazaguanine (preQ(0)). In Chromobacterium violaceum (strain ATCC 12472 / DSM 30191 / JCM 1249 / CCUG 213 / NBRC 12614 / NCIMB 9131 / NCTC 9757 / MK), this protein is 7-cyano-7-deazaguanine synthase.